A 1030-amino-acid chain; its full sequence is Protein phosphatase 1 regulatory subunit 12A (1030 aa).

A KVKF motif motif is present at residues 35–38; sequence KVKF. 6 ANK repeats span residues 39 to 68, 72 to 101, 105 to 134, 138 to 164, 198 to 227, and 231 to 260; these read DDGA…DINY, DGLT…NINQ, EGWI…HVGA, EGDT…RQGV, SGGT…DVNI, and DGWT…DMEM. (3S)-3-hydroxyasparagine; by HIF1AN; partial occurs at positions 67 and 100. N226 is subject to (3S)-3-hydroxyasparagine; by HIF1AN; partial. Disordered stretches follow at residues 290-628 and 643-928; these read LHSE…SVPT and ASTT…EKDD. Residues 291–300 show a composition bias toward basic and acidic residues; sequence HSEKRDKKSP. S299 bears the Phosphoserine mark. The span at 302 to 316 shows a compositional bias: polar residues; that stretch reads IESTANMDNNQSQKT. Positions 318-340 are enriched in basic and acidic residues; it reads KNKETLIIEPEKNASRIESLEQE. Residues 357–369 are compositionally biased toward acidic residues; the sequence is SEEDEEDDSESEA. Residues 385-402 show a composition bias toward low complexity; that stretch reads TSSTQAAPVAVTTPTVSS. Phosphoserine occurs at positions 422 and 432. Positions 422–432 are enriched in basic and acidic residues; sequence SPKEEERKDES. Phosphothreonine is present on T443. S445 is subject to Phosphoserine; by NUAK1. Y446 carries the post-translational modification Phosphotyrosine. Low complexity predominate over residues 469-480; sequence RSASSPRLSSSL. Position 472 is a phosphoserine; by NUAK1 (S472). S473 is modified (phosphoserine; by CDK1). Phosphoserine is present on S477. Basic and acidic residues predominate over residues 481-491; the sequence is DNKEKEKDSKG. S507 and S509 each carry phosphoserine. Positions 540-551 are enriched in polar residues; the sequence is NSSVNEGSTYHK. Positions 564-610 are enriched in low complexity; it reads SSSVPSTTSTPTVTSAAGLQKSLLSSTSTTTKITTGSSSAGTQSSTS. Phosphoserine is present on residues S601 and S618. Positions 614–625 are enriched in basic and acidic residues; it reads WAEDSTEKEKDS. Residues 643–660 are compositionally biased toward low complexity; sequence ASTTTLTTTTAGTVSSTT. Basic and acidic residues predominate over residues 673–682; sequence VRDEESESQR. An interaction with ROCK2 region spans residues 682–864; that stretch reads RKARSRQARQ…VSFWTQDSDE (183 aa). The segment covering 683 to 693 has biased composition (basic residues); the sequence is KARSRQARQSR. 2 positions are modified to phosphoserine; by PKA and PKG; in vitro: S692 and S695. A Phosphothreonine; by ROCK1, ROCK2, CDC42BP, ZIPK/DAPK3 and RAF1 modification is found at T696. Over residues 718–767 the composition is skewed to basic and acidic residues; it reads RTREQENEEKEKEEKEKQDKEKQEEKKESETSREDEYKQKYSRTYDETYQ. Residues 773–795 are compositionally biased toward low complexity; that stretch reads STSSSTTPSSSLSTMSSSLYASS. Residues 796 to 810 are compositionally biased toward polar residues; that stretch reads QLNRPNSLVGITSAY. S802 is modified (phosphoserine). Residues 814 to 840 show a composition bias toward basic and acidic residues; it reads ITKENEREGEKREEEKEGEDKSQPKSI. Residues 841–852 show a composition bias toward basic residues; the sequence is RERRRPREKRRS. S852 is modified (phosphoserine; by ROCK2). A compositionally biased stretch (acidic residues) spans 861-875; the sequence is DSDENEQEQQSDTEE. A phosphoserine mark is found at S862 and S871. Residues 884 to 897 are compositionally biased toward polar residues; it reads TDSISRYETSSTSA. A phosphoserine mark is found at S903 and S908. Residues 903 to 913 show a composition bias toward low complexity; the sequence is SLLGRSGSYSY. S910 bears the Phosphoserine; by NUAK1 mark. A compositionally biased stretch (basic and acidic residues) spans 914 to 928; that stretch reads LEERKPYSSRLEKDD. S995 bears the Phosphoserine mark.

In terms of assembly, PP1 comprises a catalytic subunit, PPP1CA, PPP1CB or PPP1CC, and one or several targeting or regulatory subunits. PPP1R12A mediates binding to myosin. Interacts with ARHA and CIT. Binds PPP1R12B, ROCK1 and IL16. Interacts directly with PRKG1. Non-covalent dimer of 2 dimers; PRKG1-PRKG1 and PPP1R12A-PPP1R12A. Interacts with SMTNL1. Interacts with PPP1CB; the interaction is direct. Interacts (when phosphorylated at Ser-445, Ser-472 and Ser-910) with 14-3-3. Interacts with ROCK1 and ROCK2. Interacts with isoform 1 and isoform 2 of ZIPK/DAPK3. Interacts with RAF1. Interacts with HIF1AN. Interacts with NCKAP1L. Post-translationally, phosphorylated by CIT (Rho-associated kinase). Phosphorylated cooperatively by ROCK1 and CDC42BP on Thr-696. Phosphorylated on upon DNA damage, probably by ATM or ATR. In vitro, phosphorylation of Ser-695 by PKA and PKG appears to prevent phosphorylation of the inhibitory site Thr-696, probably mediated by PRKG1. Phosphorylation at Ser-445, Ser-472 and Ser-910 by NUAK1 promotes interaction with 14-3-3, leading to inhibit interaction with myosin light chain MLC2, preventing dephosphorylation of MLC2. May be phosphorylated at Thr-696 by DMPK; may inhibit the myosin phosphatase activity. Phosphorylated at Ser-473 by CDK1 during mitosis, creating docking sites for the POLO box domains of PLK1. Subsequently, PLK1 binds and phosphorylates PPP1R12A. Expressed in striated muscles, specifically in type 2a fibers (at protein level).

The protein localises to the cytoplasm. It localises to the cytoskeleton. The protein resides in the stress fiber. Functionally, key regulator of protein phosphatase 1C (PPP1C). Mediates binding to myosin. As part of the PPP1C complex, involved in dephosphorylation of PLK1. Capable of inhibiting HIF1AN-dependent suppression of HIF1A activity. The protein is Protein phosphatase 1 regulatory subunit 12A of Homo sapiens (Human).